The primary structure comprises 910 residues: Disease susceptibility protein LOV1 (910 aa).

Residues 22-60 (ARLNGIGEQVDGLKRQLGRLQSLLKDADAKKHESERVRN) are a coiled coil. The region spanning 169-461 (EQSVEALAGH…AAEGIITSSD (293 aa)) is the NB-ARC domain. 6 LRR repeats span residues 584-609 (LPLLRVLDLSRVKFEGGKLPSSIGDL), 610-632 (IHLRFLSLHRAWISHLPSSLRNL), 634-655 (LLLYLNLGFNGMVHVPNVLKEM), 700-725 (MTKLRELSLFITDGSSDTLSSSLGQL), 726-751 (RSLEVLHLYDRQEPRVAYHGGEIVLN), and 847-871 (MPLLRALTICNCRKLKLPGGINYIT).

It belongs to the disease resistance NB-LRR family. RPP8/HRT subfamily.

Its function is as follows. Confers susceptibility to the fungus Cochliobolus victoriae by conditioning victorin-dependent (victorin is a toxin synthesized by C.victoriae) induction of defense-associated proteins. In Arabidopsis thaliana (Mouse-ear cress), this protein is Disease susceptibility protein LOV1 (LOV1).